The chain runs to 710 residues: Polyribonucleotide nucleotidyltransferase (710 aa).

Residues D491 and D497 each coordinate Mg(2+). Residues 558-618 (PRIYKIQVKP…SAAQKAIEII (61 aa)) form the KH domain. An S1 motif domain is found at 628–696 (GRIYMGKVTR…ELGRVRLSRK (69 aa)).

The protein belongs to the polyribonucleotide nucleotidyltransferase family. Mg(2+) serves as cofactor.

The protein localises to the cytoplasm. It catalyses the reaction RNA(n+1) + phosphate = RNA(n) + a ribonucleoside 5'-diphosphate. Involved in mRNA degradation. Catalyzes the phosphorolysis of single-stranded polyribonucleotides processively in the 3'- to 5'-direction. The polypeptide is Polyribonucleotide nucleotidyltransferase (Thermodesulfovibrio yellowstonii (strain ATCC 51303 / DSM 11347 / YP87)).